Consider the following 178-residue polypeptide: Protein SPEAR1 (178 aa).

Disordered stretches follow at residues 1 to 48 and 139 to 178; these read MGST…QRGL and HFLN…RLSL. Residues 14-28 show a composition bias toward low complexity; sequence SSPPSSSPTSSSSSP. Residues 46 to 54 carry the SPL motif; the sequence is RGLGVAQLE. Positions 144 to 167 are enriched in polar residues; it reads DPSSTTRRSKSLGSGIQHSGSSEN. The EAR signature appears at 170 to 176; sequence VDLELRL.

As to quaternary structure, interacts with SPL and SPEAR2. As to expression, not detected in leaves.

In terms of biological role, adapter-like transcriptional repressor recruiting TPL/TPR corepressors to inhibit TCP transcription factors. The sequence is that of Protein SPEAR1 from Arabidopsis thaliana (Mouse-ear cress).